The chain runs to 303 residues: Glycine--tRNA ligase alpha subunit (303 aa).

The protein belongs to the class-II aminoacyl-tRNA synthetase family. Tetramer of two alpha and two beta subunits.

It is found in the cytoplasm. It catalyses the reaction tRNA(Gly) + glycine + ATP = glycyl-tRNA(Gly) + AMP + diphosphate. The protein is Glycine--tRNA ligase alpha subunit of Enterobacter sp. (strain 638).